A 319-amino-acid chain; its full sequence is F-box only protein 8 (319 aa).

The region spanning 68–111 is the F-box domain; it reads FINLEMLPPELSFTILSYLNATDLCLASCVWQDLANDELLWQGL. One can recognise an SEC7 domain in the interval 146 to 276; that stretch reads FNANPDEGVN…LILLSIDLTS (131 aa).

In terms of biological role, may promote guanine-nucleotide exchange on an ARF. Promotes the activation of ARF through replacement of GDP with GTP (Potential). The sequence is that of F-box only protein 8 (FBXO8) from Homo sapiens (Human).